The chain runs to 209 residues: Phosphopantothenoylcysteine decarboxylase (209 aa).

Residues 28–30 and 53–55 each bind FMN; these read GSV and TKS. The active-site Proton donor is histidine 90. Residues 106–109 and alanine 140 each bind FMN; that span reads SANT. N-[(R)-4-phosphopantothenoyl]-L-cysteine is bound by residues asparagine 142, arginine 172, and alanine 174. Catalysis depends on cysteine 175, which acts as the Proton donor. Methionine 183 is a binding site for N-[(R)-4-phosphopantothenoyl]-L-cysteine.

The protein belongs to the HFCD (homooligomeric flavin containing Cys decarboxylase) superfamily. As to quaternary structure, homotrimer. Requires FMN as cofactor. As to expression, expressed in roots, shoots, leaves, flowers, developing siliques and seeds with highest expression in seed embryos and phloem.

The catalysed reaction is N-[(R)-4-phosphopantothenoyl]-L-cysteine + H(+) = (R)-4'-phosphopantetheine + CO2. It functions in the pathway cofactor biosynthesis; coenzyme A biosynthesis; CoA from (R)-pantothenate: step 3/5. Its function is as follows. Involved in plant growth, and salt and osmotic tolerance. Catalyzes the decarboxylation of 4'-phosphopantothenoylcysteine to 4'-phosphopantetheine, a key step in coenzyme A biosynthesis. The enzyme is also able to decarboxylate pantothenoylcysteine to pantothenoylcysteamine. In Arabidopsis thaliana (Mouse-ear cress), this protein is Phosphopantothenoylcysteine decarboxylase.